Here is a 535-residue protein sequence, read N- to C-terminus: MSTKYIFVTGGGTSSMGKGIVAASLGRLLKNRGLKVTVQKFDPYLNIDPGTMSPYQHGEVFVTDDGAETDLDLGHYERFIDINLNKYSNVTSGKVYSEILRKERKGEYLGATVQMVPHVTNMLKEKIKRAATTTDADIIITEVGGTVGDMESLPFIEALRQMKAEVGADNVMYIHTVPILHLRAAGELKTKIAQNATKTLREYGIQANMLVLRSEVPITTEMRDKIAMFCDVAPEAVIQSLDVEHLYQIPLNLQAQNMDQIVCDHLKLDAPKADMTEWSAMVDHVMNLKKKVKIALVGKYVELPDAYISVTEALKHAGYSSDAEVDINWVNANDVTDENVAELVGDAAGIIVPGGFGHRGTEGKIAAIKYARENDVPMLGICLGMQLTAVEFARNVLGLEGAHSFELDPETKYPVIDIMRDQVDVEDMGGTLRLGLYPAKLKNGSRAKAAYNDAEVVQRRHRHRYEFNNKFREDFEKAGFVFSGVSPDNRLVEIVELSDKKFFVACQYHPELQSRPNRPEELYTEFIRVAVENSK.

The interval M1–L268 is amidoligase domain. S14 is a CTP binding site. S14 lines the UTP pocket. S15 to I20 contacts ATP. L-glutamine is bound at residue Y55. D72 serves as a coordination point for ATP. 2 residues coordinate Mg(2+): D72 and E142. CTP-binding positions include D149–E151, K189–Q194, and K225. Residues K189 to Q194 and K225 each bind UTP. The 243-residue stretch at K293–K535 folds into the Glutamine amidotransferase type-1 domain. G355 serves as a coordination point for L-glutamine. The active-site Nucleophile; for glutamine hydrolysis is the C382. Residues L383–Q386, E406, and R464 contribute to the L-glutamine site. Catalysis depends on residues H509 and E511.

This sequence belongs to the CTP synthase family. In terms of assembly, homotetramer.

It carries out the reaction UTP + L-glutamine + ATP + H2O = CTP + L-glutamate + ADP + phosphate + 2 H(+). It catalyses the reaction L-glutamine + H2O = L-glutamate + NH4(+). The catalysed reaction is UTP + NH4(+) + ATP = CTP + ADP + phosphate + 2 H(+). It participates in pyrimidine metabolism; CTP biosynthesis via de novo pathway; CTP from UDP: step 2/2. With respect to regulation, allosterically activated by GTP, when glutamine is the substrate; GTP has no effect on the reaction when ammonia is the substrate. The allosteric effector GTP functions by stabilizing the protein conformation that binds the tetrahedral intermediate(s) formed during glutamine hydrolysis. Inhibited by the product CTP, via allosteric rather than competitive inhibition. Its function is as follows. Catalyzes the ATP-dependent amination of UTP to CTP with either L-glutamine or ammonia as the source of nitrogen. Regulates intracellular CTP levels through interactions with the four ribonucleotide triphosphates. The protein is CTP synthase of Lactococcus lactis subsp. lactis (strain IL1403) (Streptococcus lactis).